We begin with the raw amino-acid sequence, 284 residues long: 2-dehydro-3-deoxyphosphooctonate aldolase (284 aa).

It belongs to the KdsA family.

It is found in the cytoplasm. It carries out the reaction D-arabinose 5-phosphate + phosphoenolpyruvate + H2O = 3-deoxy-alpha-D-manno-2-octulosonate-8-phosphate + phosphate. It participates in carbohydrate biosynthesis; 3-deoxy-D-manno-octulosonate biosynthesis; 3-deoxy-D-manno-octulosonate from D-ribulose 5-phosphate: step 2/3. The protein operates within bacterial outer membrane biogenesis; lipopolysaccharide biosynthesis. This is 2-dehydro-3-deoxyphosphooctonate aldolase from Methylobacterium radiotolerans (strain ATCC 27329 / DSM 1819 / JCM 2831 / NBRC 15690 / NCIMB 10815 / 0-1).